The sequence spans 127 residues: Alpha-hordothionin (127 aa).

The signal sequence occupies residues methionine 1–glycine 18. 4 disulfides stabilise this stretch: cysteine 21–cysteine 57, cysteine 22–cysteine 49, cysteine 30–cysteine 47, and cysteine 34–cysteine 43. Residues leucine 64–alanine 127 constitute a propeptide, acidic domain.

The protein belongs to the plant thionin (TC 1.C.44) family. 4 C-C subfamily.

The protein resides in the secreted. Its function is as follows. Thionins are small plant proteins which are toxic to animal cells. They seem to exert their toxic effect at the level of the cell membrane. Their precise function is not known. This Hordeum vulgare (Barley) protein is Alpha-hordothionin (THI1.1).